The primary structure comprises 898 residues: Phosphoenolpyruvate carboxylase (898 aa).

Residues H138 and K561 contribute to the active site.

It belongs to the PEPCase type 1 family. It depends on Mg(2+) as a cofactor.

It carries out the reaction oxaloacetate + phosphate = phosphoenolpyruvate + hydrogencarbonate. Its function is as follows. Forms oxaloacetate, a four-carbon dicarboxylic acid source for the tricarboxylic acid cycle. This chain is Phosphoenolpyruvate carboxylase, found in Streptococcus pneumoniae serotype 2 (strain D39 / NCTC 7466).